Reading from the N-terminus, the 264-residue chain is 3-deoxy-manno-octulosonate cytidylyltransferase (264 aa).

It belongs to the KdsB family.

Its subcellular location is the cytoplasm. The catalysed reaction is 3-deoxy-alpha-D-manno-oct-2-ulosonate + CTP = CMP-3-deoxy-beta-D-manno-octulosonate + diphosphate. It participates in nucleotide-sugar biosynthesis; CMP-3-deoxy-D-manno-octulosonate biosynthesis; CMP-3-deoxy-D-manno-octulosonate from 3-deoxy-D-manno-octulosonate and CTP: step 1/1. It functions in the pathway bacterial outer membrane biogenesis; lipopolysaccharide biosynthesis. Activates KDO (a required 8-carbon sugar) for incorporation into bacterial lipopolysaccharide in Gram-negative bacteria. In Methylibium petroleiphilum (strain ATCC BAA-1232 / LMG 22953 / PM1), this protein is 3-deoxy-manno-octulosonate cytidylyltransferase.